We begin with the raw amino-acid sequence, 175 residues long: Crossover junction endodeoxyribonuclease RuvC (175 aa).

Residues D8, E67, and D139 contribute to the active site. Mg(2+) is bound by residues D8, E67, and D139.

The protein belongs to the RuvC family. As to quaternary structure, homodimer which binds Holliday junction (HJ) DNA. The HJ becomes 2-fold symmetrical on binding to RuvC with unstacked arms; it has a different conformation from HJ DNA in complex with RuvA. In the full resolvosome a probable DNA-RuvA(4)-RuvB(12)-RuvC(2) complex forms which resolves the HJ. Mg(2+) is required as a cofactor.

Its subcellular location is the cytoplasm. The catalysed reaction is Endonucleolytic cleavage at a junction such as a reciprocal single-stranded crossover between two homologous DNA duplexes (Holliday junction).. In terms of biological role, the RuvA-RuvB-RuvC complex processes Holliday junction (HJ) DNA during genetic recombination and DNA repair. Endonuclease that resolves HJ intermediates. Cleaves cruciform DNA by making single-stranded nicks across the HJ at symmetrical positions within the homologous arms, yielding a 5'-phosphate and a 3'-hydroxyl group; requires a central core of homology in the junction. The consensus cleavage sequence is 5'-(A/T)TT(C/G)-3'. Cleavage occurs on the 3'-side of the TT dinucleotide at the point of strand exchange. HJ branch migration catalyzed by RuvA-RuvB allows RuvC to scan DNA until it finds its consensus sequence, where it cleaves and resolves the cruciform DNA. The sequence is that of Crossover junction endodeoxyribonuclease RuvC from Marinobacter nauticus (strain ATCC 700491 / DSM 11845 / VT8) (Marinobacter aquaeolei).